Consider the following 218-residue polypeptide: MNQDDKKKAVAQAAVRYVEQDSIIGVGTGSTVNYFIEALAPIKNDIVGAVSSSEASTERLTALGIEVFDLNSVDQLSVYVDGADEITEHRHMIKGGGAALTREKIVAAVAQKFVCIIDDTKNVGVLGAFPLPVEVIPMARSYVAREIVKLGGDPVYRQGVVTDNGNVILDVHNLKILNPVELERQLNNIVGVVTNGLFAARGADVVLTGSESGVQVNE.

Substrate is bound by residues 28–31 (TGST), 81–84 (DGAD), and 94–97 (KGGG). Catalysis depends on E103, which acts as the Proton acceptor. Position 121 (K121) interacts with substrate.

The protein belongs to the ribose 5-phosphate isomerase family. As to quaternary structure, homodimer.

The catalysed reaction is aldehydo-D-ribose 5-phosphate = D-ribulose 5-phosphate. The protein operates within carbohydrate degradation; pentose phosphate pathway; D-ribose 5-phosphate from D-ribulose 5-phosphate (non-oxidative stage): step 1/1. Its function is as follows. Catalyzes the reversible conversion of ribose-5-phosphate to ribulose 5-phosphate. This is Ribose-5-phosphate isomerase A from Pseudoalteromonas atlantica (strain T6c / ATCC BAA-1087).